The following is a 429-amino-acid chain: Lysine-specific demethylase JMJ30 (429 aa).

The JmjC domain occupies 272–429 (SSPMEPTYLA…WSNEAESSSS (158 aa)). Positions 326, 328, and 405 each coordinate Fe cation.

It belongs to the JARID1 histone demethylase family. As to quaternary structure, interacts with EFM. Binds to ATXR2, ARF7 and ARF19. The cofactor is Fe(2+). Expressed ubiquitously in vasculatures, roots, rosette leaves, stems, inflorescences and siliques. Mainly present in the root meristem and root differentiation area. Observed at high level in callus.

It is found in the nucleus. The protein localises to the cytoplasm. The protein resides in the endoplasmic reticulum. The catalysed reaction is N(6),N(6),N(6)-trimethyl-L-lysyl(36)-[histone H3] + 2 2-oxoglutarate + 2 O2 = N(6)-methyl-L-lysyl(36)-[histone H3] + 2 formaldehyde + 2 succinate + 2 CO2. The enzyme catalyses N(6),N(6),N(6)-trimethyl-L-lysyl(27)-[histone H3] + 2 2-oxoglutarate + 2 O2 = N(6)-methyl-L-lysyl(27)-[histone H3] + 2 formaldehyde + 2 succinate + 2 CO2. It catalyses the reaction N(6),N(6)-dimethyl-L-lysyl(36)-[histone H3] + 2 2-oxoglutarate + 2 O2 = L-lysyl(36)-[histone H3] + 2 formaldehyde + 2 succinate + 2 CO2. Histone demethylase that demethylates 'Lys-36' (H3K36me) of histone H3 with a specific activity for H3K36me3 and H3K36me2. Also active on 'Lys-27' (H3K27me) of histone H3 with a specific activity for H3K27me3 and H3K27me2. No activity on H3K36me1 and H3K27me1. Involved in the control of flowering time by demethylating H3K36me2 at the FT locus and repressing its expression. Acts within the central clock and contributes, in parallel with LUX, to temperature compensation, probably as a component of the evening complex, to maintain circadian period at increasing temperatures; this mechanism involves binding to and regulation of CCA1 and PRR7 promoters. Works in concert with TOC1 to promote the morning-phased clock genes CCA1 and LHY which function as components of the central oscillator. Together with JMJ32, regulates the flowering-repressor FLOWERING LOCUS C (FLC) locus by removing the repressive histone modification H3 lysine 27 trimethylation (H3K27me3), especially at elevated temperatures (e.g. 29 degrees Celsius), thus preventing extreme precocious flowering. JMJ30 and JMJ32 are regulators involved in the integration of abscisic acid (ABA) and brassinosteroids (BR) signaling pathways. Together with JMJ32, controls ABA-mediated growth arrest during the post-germination stage in unfavorable conditions, and responses to ABA during root development, via the removal of repressive histone mark (H3K27me3) from the SnRK2.8 promoter, thus promoting SnRK2.8 expression and subsequent kinase-dependent ABI3 activation. In addition, removes the repressive histone marks (H3K27me3) from the BZR1 locus in response to stress and ABA, thus activating the BR signaling pathway which, in turn, inhibits the ABA signaling pathway. Able to drive tissue identity changes to promote callus formation form somatic cells via a massive genome-wide chromatin remodeling (e.g. H3K9me3 demethylation) leading to the induction of Lateral organ Boundaries-Domain (LBD) genes (e.g. LBD16 and LBD29) that establish root primordia; when in complex with ARF proteins (e.g. ARF7 and ARF19), recruits ATXR2 which promotes the deposition of H3K36me3 at LBD genes promoters, thus ensuring their stable activation during callus formation. The protein is Lysine-specific demethylase JMJ30 of Arabidopsis thaliana (Mouse-ear cress).